Here is a 245-residue protein sequence, read N- to C-terminus: U21-ctenitoxin-Pn1a (245 aa).

One can recognise a Peptidase S1 domain in the interval 1–245 (IVYGTVTTPG…FRSWMDKVMT (245 aa)). A disulfide bond links cysteine 30 and cysteine 46. Residues histidine 45 and aspartate 95 each act as charge relay system in the active site. Disulfide bonds link cysteine 161-cysteine 183 and cysteine 192-cysteine 221. Catalysis depends on serine 196, which acts as the Charge relay system.

Expressed by the venom gland.

Its subcellular location is the secreted. Protease. Hydrolyzes gelatin and succinyl casein. The protein is U21-ctenitoxin-Pn1a of Phoneutria nigriventer (Brazilian armed spider).